A 401-amino-acid chain; its full sequence is Argininosuccinate synthase (401 aa).

An ATP-binding site is contributed by 8 to 16; the sequence is AYSGGLDTS. Tyrosine 85 is a binding site for L-citrulline. An ATP-binding site is contributed by glycine 115. The L-aspartate site is built by threonine 117, asparagine 121, and aspartate 122. Asparagine 121 is a binding site for L-citrulline. Residues arginine 125, serine 173, glutamate 258, and tyrosine 270 each contribute to the L-citrulline site.

The protein belongs to the argininosuccinate synthase family. Type 1 subfamily. As to quaternary structure, homotetramer.

The protein resides in the cytoplasm. It carries out the reaction L-citrulline + L-aspartate + ATP = 2-(N(omega)-L-arginino)succinate + AMP + diphosphate + H(+). Its pathway is amino-acid biosynthesis; L-arginine biosynthesis; L-arginine from L-ornithine and carbamoyl phosphate: step 2/3. In Staphylococcus aureus (strain bovine RF122 / ET3-1), this protein is Argininosuccinate synthase.